The sequence spans 233 residues: Charged multivesicular body protein 4c (233 aa).

2 disordered regions span residues 1–24 (MSKL…SPQE) and 173–233 (QEEL…AWAT). The interval 1-153 (MSKLGKFFKG…EISEAFSQRV (153 aa)) is intramolecular interaction with C-terminus. Residues 125–183 (LNKIDDLMQEITEQQDIAQEISEAFSQRVGFGDDFDEDELMAELEELEQEELNKKMTNI) are a coiled coil. Positions 154-233 (GFGDDFDEDE…DIKQLAAWAT (80 aa)) are intramolecular interaction with N-terminus. Low complexity predominate over residues 204 to 216 (SSTARRSRAASSQ). Ser210 carries the post-translational modification Phosphoserine; by AURKB.

The protein belongs to the SNF7 family. Probable core component of the endosomal sorting required for transport complex III (ESCRT-III). ESCRT-III components are thought to multimerize to form a flat lattice on the perimeter membrane of the endosome. Several assembly forms of ESCRT-III may exist that interact and act sequentially. Self-associates. Interacts with CHMP2A. Interacts with CHMP4A. Interacts with CHMP4B. Interacts with CHMP6. Interacts with VPS4A. Interacts with PDCD6IP; the interaction is direct. Phosphorylated at Ser-210 by AURKB during cytokinesis: together with ZFYVE19/ANCHR, phosphorylated CHMP4C retains abscission-competent VPS4 (VPS4A and/or VPS4B) at the midbody ring until abscission checkpoint signaling is terminated at late cytokinesis. In terms of tissue distribution, expressed in heart, spleen and kidney.

The protein localises to the cytoplasm. Its subcellular location is the cytosol. It is found in the late endosome membrane. The protein resides in the midbody. It localises to the midbody ring. Its function is as follows. Probable core component of the endosomal sorting required for transport complex III (ESCRT-III) which is involved in multivesicular bodies (MVBs) formation and sorting of endosomal cargo proteins into MVBs. MVBs contain intraluminal vesicles (ILVs) that are generated by invagination and scission from the limiting membrane of the endosome and mostly are delivered to lysosomes enabling degradation of membrane proteins, such as stimulated growth factor receptors, lysosomal enzymes and lipids. The MVB pathway appears to require the sequential function of ESCRT-O, -I,-II and -III complexes. ESCRT-III proteins mostly dissociate from the invaginating membrane before the ILV is released. The ESCRT machinery also functions in topologically equivalent membrane fission events, such as the terminal stages of cytokinesis and the budding of enveloped viruses (HIV-1 and other lentiviruses). Key component of the cytokinesis checkpoint, a process required to delay abscission to prevent both premature resolution of intercellular chromosome bridges and accumulation of DNA damage: upon phosphorylation by AURKB, together with ZFYVE19/ANCHR, retains abscission-competent VPS4 (VPS4A and/or VPS4B) at the midbody ring until abscission checkpoint signaling is terminated at late cytokinesis. Deactivation of AURKB results in dephosphorylation of CHMP4C followed by its dissociation from ANCHR and VPS4 and subsequent abscission. ESCRT-III proteins are believed to mediate the necessary vesicle extrusion and/or membrane fission activities, possibly in conjunction with the AAA ATPase VPS4. Involved in HIV-1 p6- and p9-dependent virus release. CHMP4A/B/C are required for the exosomal release of SDCBP, CD63 and syndecan. In Homo sapiens (Human), this protein is Charged multivesicular body protein 4c (CHMP4C).